We begin with the raw amino-acid sequence, 576 residues long: Aspartate--tRNA ligase, cytoplasmic 1 (576 aa).

The disordered stretch occupies residues 1–78 (MSETTPVPVG…NWGELPMNQS (78 aa)). The span at 20–43 (LKKEQKKLEKEKKIAEAKAKKAAE) shows a compositional bias: basic and acidic residues. An L-aspartate-binding site is contributed by Glu302. An aspartate region spans residues 324-327 (QLYK). Residue Arg346 coordinates L-aspartate. ATP-binding positions include 346–348 (RAE), 354–356 (RHL), and Glu499. Ser502 and Arg506 together coordinate L-aspartate. An ATP-binding site is contributed by 547–550 (GLER).

Belongs to the class-II aminoacyl-tRNA synthetase family. Type 2 subfamily.

It localises to the cytoplasm. It carries out the reaction tRNA(Asp) + L-aspartate + ATP = L-aspartyl-tRNA(Asp) + AMP + diphosphate. In Dictyostelium discoideum (Social amoeba), this protein is Aspartate--tRNA ligase, cytoplasmic 1 (aspS1).